Reading from the N-terminus, the 584-residue chain is Extracellular serine/threonine protein kinase FAM20C (584 aa).

Over 1 to 10 (MKMMLVRRFR) the chain is Cytoplasmic. The propeptide occupies 1–92 (MKMMLVRRFR…PNKHTLRILQ (92 aa)). A helical; Signal-anchor for type II membrane protein membrane pass occupies residues 11-31 (VLILMVFLVACALHIALDLLP). Over 32 to 584 (RLERRGARPS…DTEHRAASAR (553 aa)) the chain is Lumenal. Disordered regions lie at residues 62 to 81 (QVRGRPGEPPAASSAAGDAG) and 94 to 159 (FSSD…GDAS). 2 stretches are compositionally biased toward low complexity: residues 71 to 81 (PAASSAAGDAG) and 95 to 112 (SSDPSSNLSSHSLEKLPP). Asn-101 carries an N-linked (GlcNAc...) asparagine glycan. Ser-106 is subject to Phosphoserine. Residues 116–149 (PAERALRGRDPGALRPHDPAHRPLLRDPGPRRSE) show a composition bias toward basic and acidic residues. Positions 269, 285, and 306 each coordinate ATP. Glu-306 lines the Mn(2+) pocket. N-linked (GlcNAc...) asparagine glycosylation occurs at Asn-335. Residues 354–565 (FISPANNICF…AVRDCVERNG (212 aa)) are kinase domain. 2 disulfide bridges follow: Cys-362-Cys-378 and Cys-367-Cys-371. 389–392 (AAFL) serves as a coordination point for ATP. Cystine bridges form between Cys-426-Cys-500 and Cys-501-Cys-560. Asp-458 is an active-site residue. An ATP-binding site is contributed by Glu-463. N-linked (GlcNAc...) asparagine glycosylation occurs at Asn-470. Asp-478 contacts ATP. Asp-478 lines the Mn(2+) pocket.

This sequence belongs to the FAM20 family. As to quaternary structure, homodimer; disulfide-linked. Interacts with FAM20A; probably forming a heterotetramer of 2 subunits of FAM20A and 2 subunits of FAM20C. Interacts with protease MBTPS1/S1P; the interaction results in FAM20C cleavage and secretion. Interacts with COPII components SEC23A and SEC24A; transport of FAM20C from the endoplasmic reticulum to the Golgi is likely to be mediated by COPII vesicles. Mn(2+) is required as a cofactor. N-glycosylation is required for folding. Post-translationally, autophosphorylated. In terms of processing, propeptide cleavage by MBTPS1/S1P promotes FAM20C secretion and maximal kinase activity which is essential for efficient osteoblast differentiation and biomineralization. In terms of tissue distribution, widely expressed.

Its subcellular location is the golgi apparatus membrane. The protein localises to the secreted. It is found in the endoplasmic reticulum. It catalyses the reaction L-seryl-[protein] + ATP = O-phospho-L-seryl-[protein] + ADP + H(+). The catalysed reaction is L-threonyl-[protein] + ATP = O-phospho-L-threonyl-[protein] + ADP + H(+). With respect to regulation, serine/threonine protein kinase activity is increased upon interaction with FAM20A. In terms of biological role, golgi serine/threonine protein kinase that phosphorylates secretory pathway proteins within Ser-x-Glu/pSer motifs and plays a key role in biomineralization of bones and teeth. Constitutes the main protein kinase for extracellular proteins, generating the majority of the extracellular phosphoproteome. Mainly phosphorylates proteins within the Ser-x-Glu/pSer motif, but also displays a broader substrate specificity. Phosphorylates ERO1A, enhancing its activity which is required to maintain endoplasmic reticulum redox homeostasis and for oxidative protein folding. During endoplasmic reticulum stress, phosphorylates P4HB/PDIA1 which induces a functional switch, causing P4HB to change from an oxidoreductase to a molecular chaperone. This is critical to maintain ER proteostasis and reduce cell death under ER stress. Phosphorylation of P4HB also promotes its interaction with ERN1, leading to reduced activity of ERN1, a key sensor for the endoplasmic reticulum unfolded protein response. Required for osteoblast differentiation and mineralization. Phosphorylates casein as well as a number of proteins involved in biomineralization such as AMELX, AMTN, ENAM and SPP1/OPN. In addition to its role in biomineralization, also plays a role in lipid homeostasis, wound healing and cell migration and adhesion. The polypeptide is Extracellular serine/threonine protein kinase FAM20C (Homo sapiens (Human)).